The following is a 183-amino-acid chain: Transmembrane protein 252 (183 aa).

The next 2 helical transmembrane spans lie at 8 to 28 (ILCALSLLTGFLMICLGGFFI) and 39 to 59 (LVVAYVLLPMGFVILLSGIFW).

Its subcellular location is the membrane. The chain is Transmembrane protein 252 (Tmem252) from Mus musculus (Mouse).